The chain runs to 340 residues: Cysteinyl leukotriene receptor 1 (340 aa).

The Extracellular segment spans residues 1–31; the sequence is MDGVRNLTVSCASSNTCNDTIDDFRNQVYST. N-linked (GlcNAc...) asparagine glycans are attached at residues Asn-6 and Asn-18. A helical membrane pass occupies residues 32–52; sequence LYSMITVVGFFGNGFVLYVLI. The Cytoplasmic portion of the chain corresponds to 53–60; the sequence is KTYHEKSA. Residues 61-81 traverse the membrane as a helical segment; it reads YQVYMINLAVADLLCVCTLPL. Over 82–109 the chain is Extracellular; sequence RVVYYVHKGIWLFGDFLCRLSTYALYVN. A disulfide bridge connects residues Cys-99 and Cys-176. Residues 110 to 130 traverse the membrane as a helical segment; the sequence is LYCSIFFMTAMSFFRCIAIVF. Residues 131-144 lie on the Cytoplasmic side of the membrane; the sequence is PVQNINLITHKKAK. The chain crosses the membrane as a helical span at residues 145–165; that stretch reads IVCIAIWIFVILTSSPFLMST. Topologically, residues 166–196 are extracellular; that stretch reads SYKDEKNNTKCFEPPQXNQAKYHVLVLHYVS. N-linked (GlcNAc...) asparagine glycosylation occurs at Asn-172. Residues 197 to 217 form a helical membrane-spanning segment; that stretch reads LFVGFIIPFVIIIVCYTMIIL. The Cytoplasmic portion of the chain corresponds to 218–233; it reads TLLKNSMKKNISSRKK. A helical transmembrane segment spans residues 234-254; sequence AIGMIIVVTAAFLISFMPYHI. Over 255–279 the chain is Extracellular; sequence QRTIHLHFLHNDTKHCDSVLRMQKS. The N-linked (GlcNAc...) asparagine glycan is linked to Asn-265. The chain crosses the membrane as a helical span at residues 280–300; that stretch reads VXITLSLAASNCCFDPLLYFF. The Cytoplasmic portion of the chain corresponds to 301–340; sequence SGGNFREGLSTFRKHSLSTMTYVPKKKTSLPEKAQEIYKE.

This sequence belongs to the G-protein coupled receptor 1 family.

It localises to the cell membrane. Its function is as follows. Receptor for cysteinyl leukotrienes mediating constriction of the microvascular smooth muscle during an inflammatory response. This response is mediated via a G-protein that activates a phosphatidylinositol-calcium second messenger system. The protein is Cysteinyl leukotriene receptor 1 (CYSLTR1) of Sus scrofa (Pig).